The primary structure comprises 217 residues: Putative thymidylate synthase (217 aa).

The active site involves C139.

It belongs to the thymidylate synthase family. Archaeal-type ThyA subfamily. As to quaternary structure, monomer.

The protein resides in the cytoplasm. The protein operates within pyrimidine metabolism; dTTP biosynthesis. Functionally, may catalyze the biosynthesis of dTMP using an unknown cosubstrate. In Methanosarcina acetivorans (strain ATCC 35395 / DSM 2834 / JCM 12185 / C2A), this protein is Putative thymidylate synthase.